We begin with the raw amino-acid sequence, 25 residues long: Inorganic pyrophosphatase (25 aa).

In terms of assembly, monomer. Mg(2+) is required as a cofactor.

The enzyme catalyses diphosphate + H2O = 2 phosphate + H(+). This chain is Inorganic pyrophosphatase, found in Cyanophora paradoxa.